Reading from the N-terminus, the 118-residue chain is Cell division protein FtsB (118 aa).

The Cytoplasmic segment spans residues 1–6; sequence MRNWRW. Residues 7–24 traverse the membrane as a helical segment; the sequence is LLLVLAALLAWLQHRFWF. The Periplasmic portion of the chain corresponds to 25–118; it reads GPGNSGEVRM…DLSQPRREKR (94 aa). Positions 30–66 form a coiled coil; that stretch reads GEVRMLQVQIVQQHQENERLRQRNASLAAEVKNLKDG. The tract at residues 98 to 118 is disordered; the sequence is LPNDTSADHGVDLSQPRREKR. Residues 103–118 are compositionally biased toward basic and acidic residues; that stretch reads SADHGVDLSQPRREKR.

Belongs to the FtsB family. Part of a complex composed of FtsB, FtsL and FtsQ.

The protein localises to the cell inner membrane. Essential cell division protein. May link together the upstream cell division proteins, which are predominantly cytoplasmic, with the downstream cell division proteins, which are predominantly periplasmic. The polypeptide is Cell division protein FtsB (Xylella fastidiosa (strain M23)).